The following is a 144-amino-acid chain: Maximins z/Hv (144 aa).

The first 18 residues, 1–18, serve as a signal peptide directing secretion; it reads MNFKYIVAVSFLIASGYA. Positions 19–43 are excised as a propeptide; that stretch reads RSEENDVQSLSQREVLEEESLREIR. Asn-70 carries the asparagine amide modification. A propeptide spanning residues 74-123 is cleaved from the precursor; sequence TAEDHEVMKRLKAVMRDLDSLDHPEEASERETRGFNQEEIANLFTKKEKR. Ile-143 bears the Isoleucine amide mark.

This sequence belongs to the bombinin family. As to expression, expressed by the skin glands.

The protein resides in the secreted. In terms of biological role, maximin-z shows antimicrobial activity against bacteria and against the fungus C.albicans. It has little hemolytic activity. Its function is as follows. Maximin-Hv shows antimicrobial activity against bacteria and against the fungus C.albicans. Shows strong hemolytic activity. This is Maximins z/Hv from Bombina maxima (Giant fire-bellied toad).